Here is a 314-residue protein sequence, read N- to C-terminus: Methionyl-tRNA formyltransferase (314 aa).

Position 110–113 (Ser-110–Pro-113) interacts with (6S)-5,6,7,8-tetrahydrofolate.

It belongs to the Fmt family.

It carries out the reaction L-methionyl-tRNA(fMet) + (6R)-10-formyltetrahydrofolate = N-formyl-L-methionyl-tRNA(fMet) + (6S)-5,6,7,8-tetrahydrofolate + H(+). In terms of biological role, attaches a formyl group to the free amino group of methionyl-tRNA(fMet). The formyl group appears to play a dual role in the initiator identity of N-formylmethionyl-tRNA by promoting its recognition by IF2 and preventing the misappropriation of this tRNA by the elongation apparatus. The chain is Methionyl-tRNA formyltransferase from Bacillus cereus (strain G9842).